A 75-amino-acid chain; its full sequence is Translational regulator CsrA (75 aa).

The protein belongs to the CsrA/RsmA family. In terms of assembly, homodimer; the beta-strands of each monomer intercalate to form a hydrophobic core, while the alpha-helices form wings that extend away from the core.

Its subcellular location is the cytoplasm. Functionally, a translational regulator that binds mRNA to regulate translation initiation and/or mRNA stability. Usually binds in the 5'-UTR at or near the Shine-Dalgarno sequence preventing ribosome-binding, thus repressing translation. Its main target seems to be the major flagellin gene, while its function is anatagonized by FliW. This is Translational regulator CsrA from Exiguobacterium sibiricum (strain DSM 17290 / CCUG 55495 / CIP 109462 / JCM 13490 / 255-15).